We begin with the raw amino-acid sequence, 293 residues long: Putative ABC transporter ATP-binding protein AF_0731 (293 aa).

Residues 2–236 (IEAVDLHFCY…RKLGIRSFSL (235 aa)) form the ABC transporter domain. Position 34-41 (34-41 (GRNGAGKT)) interacts with ATP.

This sequence belongs to the ABC transporter superfamily.

It localises to the cell membrane. In terms of biological role, probably part of an ABC transporter complex. Responsible for energy coupling to the transport system. The sequence is that of Putative ABC transporter ATP-binding protein AF_0731 from Archaeoglobus fulgidus (strain ATCC 49558 / DSM 4304 / JCM 9628 / NBRC 100126 / VC-16).